Consider the following 318-residue polypeptide: 2-keto-3-deoxygluconate permease (318 aa).

The next 10 membrane-spanning stretches (helical) occupy residues L10–P30, G42–I62, I82–P102, L109–L129, A139–G159, L163–A183, T201–H221, A224–A244, V257–A277, and T288–L308.

It belongs to the KdgT transporter family.

The protein resides in the cell inner membrane. The catalysed reaction is 2-dehydro-3-deoxy-D-gluconate(in) + H(+)(in) = 2-dehydro-3-deoxy-D-gluconate(out) + H(+)(out). Catalyzes the proton-dependent uptake of 2-keto-3-deoxygluconate (KDG) into the cell. This is 2-keto-3-deoxygluconate permease from Xanthomonas oryzae pv. oryzae (strain MAFF 311018).